Here is a 190-residue protein sequence, read N- to C-terminus: MGAELCKRICCEFGTTSGEPLKDALGRQVSLRSYDNIPPTSSSDEGEDDDDGEDDDNEERQQKLRLCGSGCGGNDSSSGSHREATHDGPKKNAVRSTFREDKAPKPSKQSKKKKKPSKHHHHQQSSIMQETDDLDEEDTSIYLSPPPVPPVQVVAKRLPRPDTPRTPRQKKISQRPPTPGTKKPAASLPF.

Gly-2 is lipidated: N-myristoyl glycine; by host. A disordered region spans residues 14-190 (GTTSGEPLKD…TKKPAASLPF (177 aa)). A compositionally biased stretch (polar residues) spans 30 to 43 (SLRSYDNIPPTSSS). Over residues 44 to 58 (DEGEDDDDGEDDDNE) the composition is skewed to acidic residues. Positions 80–90 (SHREATHDGPK) are enriched in basic and acidic residues. Over residues 108-123 (KQSKKKKKPSKHHHHQ) the composition is skewed to basic residues. Over residues 130 to 139 (ETDDLDEEDT) the composition is skewed to acidic residues.

The protein belongs to the herpesviridae cytoplasmic envelopment protein 3 family. Interacts with cytoplasmic envelopment protein 2; this interaction is essential for the proper localization of each protein to the assembly complex and thus for the production of infectious virus. In terms of processing, myristoylation and palmitoylation (probably on one or more of the nearby cysteines at the N-terminus) enable membrane-binding and Golgi apparatus-specific targeting and are essential for efficient packaging. Post-translationally, phosphorylated. Phosphorylation does not seem to be required for recycling to the host Golgi apparatus. Packaging is selective for underphosphorylated forms.

It is found in the virion tegument. The protein resides in the virion membrane. It localises to the host cell membrane. The protein localises to the host Golgi apparatus membrane. In terms of biological role, plays an important role in the cytoplasmic envelopment of tegument proteins and capsids during the assembly and egress processes. Also participates in viral entry at the fusion step probably by regulating the core fusion machinery. The chain is Cytoplasmic envelopment protein 3 (UL99) from Human cytomegalovirus (strain Merlin) (HHV-5).